Here is a 545-residue protein sequence, read N- to C-terminus: Chaperonin GroEL (545 aa).

Residues 29–32, K50, 86–90, G414, 477–479, and D493 each bind ATP; these read TMGP, DGTTT, and NAA.

The protein belongs to the chaperonin (HSP60) family. Forms a cylinder of 14 subunits composed of two heptameric rings stacked back-to-back. Interacts with the co-chaperonin GroES.

Its subcellular location is the cytoplasm. It carries out the reaction ATP + H2O + a folded polypeptide = ADP + phosphate + an unfolded polypeptide.. Functionally, together with its co-chaperonin GroES, plays an essential role in assisting protein folding. The GroEL-GroES system forms a nano-cage that allows encapsulation of the non-native substrate proteins and provides a physical environment optimized to promote and accelerate protein folding. The protein is Chaperonin GroEL of Campylobacter fetus subsp. fetus (strain 82-40).